Reading from the N-terminus, the 285-residue chain is UPF0603 protein At1g54780, chloroplastic (285 aa).

2 disordered regions span residues 1 to 48 (METL…LSTR) and 228 to 251 (GQPDPGGPTVKDSKRESNFKTKEE). The span at 22–40 (HQTKPTSHSLSLSKPTTFS) shows a compositional bias: polar residues. Residues 238-251 (KDSKRESNFKTKEE) show a composition bias toward basic and acidic residues. Residues 259–279 (FSLVVGGLLVIAFVVPMAQYF) traverse the membrane as a helical segment.

It belongs to the UPF0603 family.

It localises to the plastid. The protein localises to the chloroplast thylakoid membrane. The polypeptide is UPF0603 protein At1g54780, chloroplastic (Arabidopsis thaliana (Mouse-ear cress)).